Here is a 76-residue protein sequence, read N- to C-terminus: Acyl carrier protein (76 aa).

Positions 1 to 76 (MATFDDVKDV…AAVDYIDNNQ (76 aa)) constitute a Carrier domain. Ser36 carries the O-(pantetheine 4'-phosphoryl)serine modification.

This sequence belongs to the acyl carrier protein (ACP) family. In terms of processing, 4'-phosphopantetheine is transferred from CoA to a specific serine of apo-ACP by AcpS. This modification is essential for activity because fatty acids are bound in thioester linkage to the sulfhydryl of the prosthetic group.

It is found in the cytoplasm. It participates in lipid metabolism; fatty acid biosynthesis. Carrier of the growing fatty acid chain in fatty acid biosynthesis. The sequence is that of Acyl carrier protein from Deinococcus radiodurans (strain ATCC 13939 / DSM 20539 / JCM 16871 / CCUG 27074 / LMG 4051 / NBRC 15346 / NCIMB 9279 / VKM B-1422 / R1).